Consider the following 200-residue polypeptide: MTSAETASRAAESGGTPVRPCSRPHRAPSPAAPSRPGAPAAGPRKLLVPGLPCLVRGGWPWTRPDSSPFRPAARPRMSPHRSPAVARRCGRPRRRDPRRRRTPALPRPWPGRGGPGRSLLHRHLFIQQLLRTCWPALPRDRTPAPGGTMPGAALAGPGRQASGSPAPQSEGAPPRPWTPLQPGLHHRPPSSSSGLLSSFF.

2 stretches are compositionally biased toward low complexity: residues 1–13 and 28–44; these read MTSA…AAES and PSPA…AGPR. 2 disordered regions span residues 1–116 and 137–200; these read MTSA…GGPG and LPRD…SSFF. Over residues 88–102 the composition is skewed to basic residues; it reads RCGRPRRRDPRRRRT. Over residues 189 to 200 the composition is skewed to low complexity; the sequence is PSSSSGLLSSFF.

This is an uncharacterized protein from Homo sapiens (Human).